We begin with the raw amino-acid sequence, 65 residues long: Toxin VmKTx1 (65 aa).

A signal peptide spans 1–21; the sequence is MKTSCLLTILLLSFLVAVAVA. Residues 22-28 constitute a propeptide that is removed on maturation; the sequence is EGERSAR. Cystine bridges form between Cys34-Cys54, Cys40-Cys59, Cys44-Cys61, and Cys49-Cys64. At Cys64 the chain carries Cysteine amide.

Belongs to the short scorpion toxin superfamily. Potassium channel inhibitor family. Alpha-KTx 23 subfamily. Expressed by the venom gland.

The protein localises to the secreted. In terms of biological role, voltage-gated potassium channel inhibitor. Selectively and reversibly binds (Kd=0.77 nM) and blocks hKv1.3/KCNA3 potassium channels of human T-lymphocytes. Also shows a very weak effect on hKv1.2/KCNA2 (Kd=7.1 uM). Also reduces the fraction of CD40L expressing T cells that are stimulated by alphaCD3/alphaCD28. The polypeptide is Toxin VmKTx1 (Vaejovis mexicanus smithi (Mexican scorpion)).